A 66-amino-acid chain; its full sequence is Large ribosomal subunit protein bL31 (66 aa).

Positions 16, 18, 36, and 39 each coordinate Zn(2+).

Belongs to the bacterial ribosomal protein bL31 family. Type A subfamily. As to quaternary structure, part of the 50S ribosomal subunit. Zn(2+) serves as cofactor.

Binds the 23S rRNA. In Desulforamulus reducens (strain ATCC BAA-1160 / DSM 100696 / MI-1) (Desulfotomaculum reducens), this protein is Large ribosomal subunit protein bL31.